The primary structure comprises 81 residues: MSGHALAARTLLAAADELVGGPPVEASAAALAGDAAGAWRTAAVELARALVRAVAESHGVAAVLFAATAAAAAAVDRGDPP.

In terms of biological role, antitoxin component of a type II toxin-antitoxin (TA) system. Neutralizes the effect of cognate toxin MT2730. This chain is Antitoxin MT2731, found in Mycobacterium tuberculosis (strain CDC 1551 / Oshkosh).